The sequence spans 216 residues: MEWRFADTPVSYPEALAFMDDRIAKIREDRAGECVWLLEHPPLYTAGTSADPADLLSPDRFPVYAAGRGGQYTYHGPGQRVGYVMLDLRRRGKDVRCFVHNLEELMIRALAEFNIRGERREGRVGIWVARGGGREDKIGAIGVRVRHWITFHGFALNVEPDLSHFSGIVPCGISDHGVTSLWDLGQTATLQEVDSALMRSFDAVFGPCPTESLTST.

Residues 29–209 (DRAGECVWLL…SFDAVFGPCP (181 aa)) enclose the BPL/LPL catalytic domain. Residues 68–75 (RGGQYTYH), 140–142 (AIG), and 153–155 (GFA) contribute to the substrate site. Catalysis depends on C171, which acts as the Acyl-thioester intermediate.

Belongs to the LipB family.

It is found in the cytoplasm. The catalysed reaction is octanoyl-[ACP] + L-lysyl-[protein] = N(6)-octanoyl-L-lysyl-[protein] + holo-[ACP] + H(+). Its pathway is protein modification; protein lipoylation via endogenous pathway; protein N(6)-(lipoyl)lysine from octanoyl-[acyl-carrier-protein]: step 1/2. Its function is as follows. Catalyzes the transfer of endogenously produced octanoic acid from octanoyl-acyl-carrier-protein onto the lipoyl domains of lipoate-dependent enzymes. Lipoyl-ACP can also act as a substrate although octanoyl-ACP is likely to be the physiological substrate. In Rhodospirillum rubrum (strain ATCC 11170 / ATH 1.1.1 / DSM 467 / LMG 4362 / NCIMB 8255 / S1), this protein is Octanoyltransferase.